Consider the following 305-residue polypeptide: MSSLVTPINLDKINHSQSTVKDYILLMKPRVMSLVIFTGFVGIWLAPYSVHPFIAGIAVVCIALGAGSAGAINMWYDRDIDSLMKRTQKRPIVRGAIEPDEALSFGLITGFFAVFFMALCVNLLASFLLLFTIFYYICIYTIWLKRRSIQNIVIGGVSGALPPVIGYAAVSNTISLESIILFLIIFIWTPPHSWALALFCNDDYKNCKVPMMPAVKGNLYTKKQILIYSILLFIVSLMPFFIGMNNFIYLITSGILGLVFLYYSGSLFYDTPDNKQAKRFFAYSIFYLFFIFLLLSSTSTISLIS.

The next 9 membrane-spanning stretches (helical) occupy residues 31-51 (VMSLVIFTGFVGIWLAPYSVH), 52-72 (PFIAGIAVVCIALGAGSAGAI), 102-119 (ALSFGLITGFFAVFFMAL), 123-145 (LLASFLLLFTIFYYICIYTIWLK), 151-171 (NIVIGGVSGALPPVIGYAAVS), 179-199 (IILFLIIFIWTPPHSWALALF), 225-245 (ILIYSILLFIVSLMPFFIGMN), 247-267 (FIYLITSGILGLVFLYYSGSL), and 284-304 (SIFYLFFIFLLLSSTSTISLI).

The protein belongs to the UbiA prenyltransferase family. Protoheme IX farnesyltransferase subfamily.

It is found in the cell inner membrane. The enzyme catalyses heme b + (2E,6E)-farnesyl diphosphate + H2O = Fe(II)-heme o + diphosphate. The protein operates within porphyrin-containing compound metabolism; heme O biosynthesis; heme O from protoheme: step 1/1. Functionally, converts heme B (protoheme IX) to heme O by substitution of the vinyl group on carbon 2 of heme B porphyrin ring with a hydroxyethyl farnesyl side group. This is Protoheme IX farnesyltransferase from Rickettsia felis (strain ATCC VR-1525 / URRWXCal2) (Rickettsia azadi).